The sequence spans 451 residues: Protein-tyrosine kinase 6 (451 aa).

The SH3 domain maps to 8–72 (HLGPKYVGLW…PHNYLAERET (65 aa)). 4 positions are modified to phosphotyrosine; by autocatalysis: Y13, Y61, Y66, and Y114. In terms of domain architecture, SH2 spans 78–170 (WFFGCISRSE…SHGLRLAAPC (93 aa)). The segment at 171–190 (RKHEPEPLPHWDDWERPREE) is linker. The region spanning 191 to 445 (FTLCRKLGSG…ALRERLSSFT (255 aa)) is the Protein kinase domain. ATP contacts are provided by residues 197–205 (LGSGYFGEV) and K219. Catalysis depends on D312, which acts as the Proton acceptor. Phosphotyrosine; by autocatalysis occurs at positions 342 and 351. Y447 carries the phosphotyrosine modification.

Belongs to the protein kinase superfamily. Tyr protein kinase family. BRK/PTK6/SIK subfamily. Interacts with GAP-A.p65. Interacts (via SH3 and SH2 domains) with KHDRBS1. Interacts (via SH3 and SH2 domains) with phosphorylated IRS4. Interacts with ADAM15. Interacts (via SH3 domain) with SFPQ. Interacts with EGFR and ERBB2. Interacts with STAP2. Interacts with PNX. Interacts with SFPQ. Interacts with PTK/ATK. Interacts with CTNNB1. Autophosphorylated. Autophosphorylation of Tyr-342 leads to an increase of kinase activity. Tyr-447 binds to the SH2 domain when phosphorylated and negatively regulates kinase activity. As to expression, epithelia-specific. Very high level in colon and high levels in small intestine and prostate, and low levels in some fetal tissues. Not expressed in breast or ovarian tissue but expressed in high percentage of breast and ovarian cancers. Also overexpressed in some metastatic melanomas, lymphomas, colon cancers, squamous cell carcinomas and prostate cancers. Also found in melanocytes. Not expressed in heart, brain, placenta, lung, liver, skeletal muscle, kidney and pancreas. Isoform 2 is present in prostate epithelial cell lines derived from normal prostate and prostate adenocarcinomas, as well as in a variety of cell lines.

Its subcellular location is the cytoplasm. The protein localises to the nucleus. It is found in the cell projection. It localises to the ruffle. The protein resides in the membrane. The enzyme catalyses L-tyrosyl-[protein] + ATP = O-phospho-L-tyrosyl-[protein] + ADP + H(+). Its activity is regulated as follows. Activated by EGF, NRG1 and IGF1. Inhibited by SOCS3 to phosphorylate STAT3. Stabilized in the inactive form by an association between the SH3 domain and the SH2-TK linker region. Interaction between Trp-184 within SH2-TK linker region and the catalytic domain appears essential for positive regulation of kinase activity. Its function is as follows. Non-receptor tyrosine-protein kinase implicated in the regulation of a variety of signaling pathways that control the differentiation and maintenance of normal epithelia, as well as tumor growth. Function seems to be context dependent and differ depending on cell type, as well as its intracellular localization. A number of potential nuclear and cytoplasmic substrates have been identified. These include the RNA-binding proteins: KHDRBS1/SAM68, KHDRBS2/SLM1, KHDRBS3/SLM2 and SFPQ/PSF; transcription factors: STAT3 and STAT5A/B and a variety of signaling molecules: ARHGAP35/p190RhoGAP, PXN/paxillin, BTK/ATK, STAP2/BKS. Phosphorylates the GTPase-activating protein ARAP1 following EGF stimulation which enhances EGFR signaling by delaying EGFR down-regulation. Also associates with a variety of proteins that are likely upstream of PTK6 in various signaling pathways, or for which PTK6 may play an adapter-like role. These proteins include ADAM15, EGFR, ERBB2, ERBB3 and IRS4. In normal or non-tumorigenic tissues, PTK6 promotes cellular differentiation and apoptosis. In tumors PTK6 contributes to cancer progression by sensitizing cells to mitogenic signals and enhancing proliferation, anchorage-independent survival and migration/invasion. Association with EGFR, ERBB2, ERBB3 may contribute to mammary tumor development and growth through enhancement of EGF-induced signaling via BTK/AKT and PI3 kinase. Contributes to migration and proliferation by contributing to EGF-mediated phosphorylation of ARHGAP35/p190RhoGAP, which promotes association with RASA1/p120RasGAP, inactivating RhoA while activating RAS. EGF stimulation resulted in phosphorylation of PNX/Paxillin by PTK6 and activation of RAC1 via CRK/CrKII, thereby promoting migration and invasion. PTK6 activates STAT3 and STAT5B to promote proliferation. Nuclear PTK6 may be important for regulating growth in normal epithelia, while cytoplasmic PTK6 might activate oncogenic signaling pathways. Functionally, inhibits PTK6 phosphorylation and PTK6 association with other tyrosine-phosphorylated proteins. This chain is Protein-tyrosine kinase 6 (PTK6), found in Homo sapiens (Human).